Consider the following 322-residue polypeptide: CXXC-type zinc finger protein 5 (322 aa).

Residues 1–10 (MSSLGGGSQD) are compositionally biased toward gly residues. The tract at residues 1-100 (MSSLGGGSQD…SGGGSMMGGE (100 aa)) is disordered. Composition is skewed to low complexity over residues 11–20 (AGGSSSSSTN) and 28–52 (SGPK…VADD). Thr53 is modified (phosphothreonine). Positions 87–97 (SSGGSGGGSMM) are enriched in gly residues. The CXXC-type zinc-finger motif lies at 256-297 (GKKKRKRCGMCAPCRRRINCEQCSSCRNRKTGHQICKFRKCE). A Nuclear localization signal motif is present at residues 257 to 262 (KKKRKR). The Zn(2+) site is built by Cys263, Cys266, Cys269, Cys275, Cys278, Cys281, Cys291, and Cys296.

Interacts with DVL1. Interacts with RBPJ.

It is found in the nucleus. Its subcellular location is the cytoplasm. Its function is as follows. May indirectly participate in activation of the NF-kappa-B and MAPK pathways. Acts as a mediator of BMP4-mediated modulation of canonical Wnt signaling activity in neural stem cells. Required for DNA damage-induced ATM phosphorylation, p53 activation and cell cycle arrest. Involved in myelopoiesis. Binds to the oxygen responsive element of COX4I2 and represses its transcription under hypoxia conditions (4% oxygen), as well as normoxia conditions (20% oxygen). May repress COX4I2 transactivation induced by CHCHD2 and RBPJ. Binds preferentially to DNA containing cytidine-phosphate-guanosine (CpG) dinucleotides over CpH (H=A, T, and C), hemimethylated-CpG and hemimethylated-hydroxymethyl-CpG. This is CXXC-type zinc finger protein 5 (CXXC5) from Pongo abelii (Sumatran orangutan).